Reading from the N-terminus, the 185-residue chain is uncharacterized protein (185 aa).

The G domain occupies 17–137; that stretch reads GKSSIMNALF…QKPIIVVINK (121 aa).

This is an uncharacterized protein from Methanocaldococcus jannaschii (strain ATCC 43067 / DSM 2661 / JAL-1 / JCM 10045 / NBRC 100440) (Methanococcus jannaschii).